Consider the following 409-residue polypeptide: MTQFRSDFLRLLETRGYIHQITDAKSLDEKASQSVIAAYIGFDPTAASLHVGSLLQIMMLRRLQQAGHKPIVLMGGGTGKIGDPSFKDEARKLLDEDTIKANIASIKRVFEHFLHFGDGENDAVMVDNAEWLDRLEYIPFLRDVGQHFSVNRMLSFDSVKLRLDREQSLSFLEFNYMILQAYDFLELSRRFGVCLQLGGSDQWGNIVNGIELARRMDGKEVFGLTSPLMTTADGVKMGKTVGGAVWLNGDMCSPYDYWQFWRNTHDADVERFLKLFTDLPLDEIARLAALEGSEINEAKKILANEATKLAHGEKAAEEAAATAKKTFEEGAAGDALPVMKVSDSSISLVDALVGLGLVASKAEARRMIRGGGARINGEKALDEKAVIEVTAENIRISAGKKAHGVIQAG.

L-tyrosine is bound at residue Tyr-39. The 'HIGH' region signature appears at 44–53 (PTAASLHVGS). Residues Tyr-176 and Gln-180 each contribute to the L-tyrosine site. Residues 236–240 (KMGKT) carry the 'KMSKS' region motif. ATP is bound at residue Lys-239. Residues 346-408 (ISLVDALVGL…GKKAHGVIQA (63 aa)) enclose the S4 RNA-binding domain.

It belongs to the class-I aminoacyl-tRNA synthetase family. TyrS type 1 subfamily. As to quaternary structure, homodimer.

It localises to the cytoplasm. It carries out the reaction tRNA(Tyr) + L-tyrosine + ATP = L-tyrosyl-tRNA(Tyr) + AMP + diphosphate + H(+). Its function is as follows. Catalyzes the attachment of tyrosine to tRNA(Tyr) in a two-step reaction: tyrosine is first activated by ATP to form Tyr-AMP and then transferred to the acceptor end of tRNA(Tyr). In Zymomonas mobilis subsp. mobilis (strain ATCC 31821 / ZM4 / CP4), this protein is Tyrosine--tRNA ligase.